Here is a 529-residue protein sequence, read N- to C-terminus: MQQRRPVRRALLSVSDKAGIIEFAQALSARGVELLSTGGTARLLAEKGLPVTEVSDYTGFPEMMDGRVKTLHPKVHGGILGRRGQDDAIMEQHHIAPIDMVVVNLYPFAETVARVGCSLEDAVENIDIGGPTMVRSAAKNHKDVAIVVKSSDYDAIIKEMDANEGSLTLDTRFDLAIKAFEHTAAYDSMIANYFGSMVPAYHGESKEAAGRFPRTLNLNFIKKQDMRYGENSHQQAAFYIEENVKEASVATAQQVQGKALSYNNIADTDAALECVKEFNEPACVIVKHANPCGVAVSTSILDAYDRAYKTDPTSAFGGIIAFNRELDAETAQAIISRQFVEVIIAPSASEEALKITAAKQNVRVLTCGQWASRVPGLDFKRVNGGLLVQDRDLGMVSEAELRVVSKRQPTEQELRDALFCWKVAKFVKSNAIVYAKENMTIGIGAGQMSRVYSAKIAGIKAADEGLEVKGSAMASDAFFPFRDGIDAAAAVGVSCVIQPGGSIRDDEVIAAADEHGIAMIFTDMRHFRH.

The MGS-like domain occupies Met-1 to Val-148.

It belongs to the PurH family.

It carries out the reaction (6R)-10-formyltetrahydrofolate + 5-amino-1-(5-phospho-beta-D-ribosyl)imidazole-4-carboxamide = 5-formamido-1-(5-phospho-D-ribosyl)imidazole-4-carboxamide + (6S)-5,6,7,8-tetrahydrofolate. It catalyses the reaction IMP + H2O = 5-formamido-1-(5-phospho-D-ribosyl)imidazole-4-carboxamide. It functions in the pathway purine metabolism; IMP biosynthesis via de novo pathway; 5-formamido-1-(5-phospho-D-ribosyl)imidazole-4-carboxamide from 5-amino-1-(5-phospho-D-ribosyl)imidazole-4-carboxamide (10-formyl THF route): step 1/1. The protein operates within purine metabolism; IMP biosynthesis via de novo pathway; IMP from 5-formamido-1-(5-phospho-D-ribosyl)imidazole-4-carboxamide: step 1/1. This chain is Bifunctional purine biosynthesis protein PurH, found in Salmonella schwarzengrund (strain CVM19633).